A 386-amino-acid chain; its full sequence is N-terminal EF-hand calcium-binding protein 2 (386 aa).

R10 carries the omega-N-methylarginine modification. R42 is subject to Asymmetric dimethylarginine. EF-hand domains are found at residues 60–95 (GGTAVILDIFRRADKNDDGKLSLEEFQLFFADGVLN) and 96–129 (EKELEDLFHTIDSDNTNHVDTKELCDYFVDHMGD). Ca(2+)-binding residues include D73, N75, D77, K79, E84, D107, D109, T111, H113, and E118. A coiled-coil region spans residues 170–201 (LKETANQIQSLLSSVESAVEAIEEQTSQLRQN). The ABM domain maps to 286–375 (QLVRQEMAVC…SQPEALSRIL (90 aa)).

Interacts (calcium-dependent) with ADORA2A and GRM5. In terms of tissue distribution, expressed in brain. Expressed in the spinal dorsal horn with especially strong expression in lamina IIi; found in excitory synaptic boutons and in ependymal cells (at protein level).

The protein localises to the cytoplasm. Its subcellular location is the cell projection. It localises to the dendrite. The protein resides in the axon. It is found in the cell membrane. Its function is as follows. May act as a signaling scaffold protein that senses intracellular calcium. Can modulate ligand-induced internalization of ADORA2A and coupling efficiency of mGluR5/GRM5; for both receptors may regulate signaling activity such as promoting MAPK1/3 (ERK1/2) activation. The sequence is that of N-terminal EF-hand calcium-binding protein 2 (NECAB2) from Homo sapiens (Human).